The following is a 406-amino-acid chain: Kelch domain-containing protein 1 (406 aa).

Kelch repeat units follow at residues 24–76 (FLYV…CGAC), 80–134 (RLYV…VYKD), 135–181 (RLIY…TKTR), 208–258 (KGYV…AITD), 260–307 (KLFL…ACLG), and 311–361 (EIMV…LKSQ).

In terms of assembly, component of a CRL5 E3 ubiquitin-protein ligase complex, also named ECS (Elongin BC-CUL2/5-SOCS-box protein) complex, composed of CUL5, Elongin BC (ELOB and ELOC), RBX1 and substrate-specific adapter KLHDC1.

The protein localises to the cytoplasm. Its subcellular location is the cytosol. It participates in protein modification; protein ubiquitination. In terms of biological role, substrate-recognition component of a Cul5-RING (CRL5) E3 ubiquitin-protein ligase complex of the DesCEND (destruction via C-end degrons) pathway, which recognizes a C-degron located at the extreme C terminus of target proteins, leading to their ubiquitination and degradation. The C-degron recognized by the DesCEND pathway is usually a motif of less than ten residues and can be present in full-length proteins, truncated proteins or proteolytically cleaved forms. The CRL5(KLHDC1) complex mediates ubiquitination and degradation of truncated SELENOS selenoprotein produced by failed UGA/Sec decoding, which ends with a glycine. The polypeptide is Kelch domain-containing protein 1 (Mus musculus (Mouse)).